The primary structure comprises 337 residues: Tryptophan--tRNA ligase (337 aa).

Residues 11–13 and 19–20 each bind ATP; these read QPT and GN. Residues 12-20 carry the 'HIGH' region motif; that stretch reads PTGALHLGN. Asp135 is a binding site for L-tryptophan. ATP contacts are provided by residues 147–149, Val191, and 200–204; these read GED and KMSKS. Positions 200 to 204 match the 'KMSKS' region motif; that stretch reads KMSKS.

It belongs to the class-I aminoacyl-tRNA synthetase family. In terms of assembly, homodimer.

It localises to the cytoplasm. The enzyme catalyses tRNA(Trp) + L-tryptophan + ATP = L-tryptophyl-tRNA(Trp) + AMP + diphosphate + H(+). Catalyzes the attachment of tryptophan to tRNA(Trp). In Prochlorococcus marinus (strain MIT 9313), this protein is Tryptophan--tRNA ligase.